The sequence spans 317 residues: uncharacterized protein (317 aa).

Residues 68–78 (DSTNTDISNET) are compositionally biased toward low complexity. The tract at residues 68–87 (DSTNTDISNETPILSNNTPI) is disordered.

This is an uncharacterized protein from Methanocaldococcus jannaschii (strain ATCC 43067 / DSM 2661 / JAL-1 / JCM 10045 / NBRC 100440) (Methanococcus jannaschii).